The sequence spans 589 residues: Serine/threonine-protein phosphatase 2A 65 kDa regulatory subunit A alpha isoform (589 aa).

Ala-2 is modified (N-acetylalanine). HEAT repeat units lie at residues 8–46 (DSLY…GVER), 47–84 (TRSE…GGPE), 85–123 (YVHC…SPSD), 124–161 (LEAH…VSSA), 162–200 (VKAE…ELDN), 201–239 (VKSE…PQED), 240–278 (LEAL…GPEI), 279–321 (TKTD…RENV), 322–360 (IMTQ…GKDN), 361–399 (TIEH…GIRQ), 400–438 (LSQS…GVEF), 439–477 (FDEK…GKEW), 478–516 (AHAT…GQDI), 517–555 (TTKH…DNST), and 556–589 (LQSE…LSLA). Lys-280 is subject to N6-acetyllysine.

The protein belongs to the phosphatase 2A regulatory subunit A family. PP2A consists of a common heterodimeric core enzyme, composed of PPP2CA a 36 kDa catalytic subunit (subunit C) and PPP2R1A a 65 kDa constant regulatory subunit (PR65 or subunit A), that associates with a variety of regulatory subunits. Proteins that associate with the core dimer include three families of regulatory subunits B (the R2/B/PR55/B55, R3/B''/PR72/PR130/PR59 and R5/B'/B56 families), the 48 kDa variable regulatory subunit, viral proteins, and cell signaling molecules. Found in a complex with at least ARL2, PPP2CB, PPP2R1A, PPP2R2A, PPP2R5E and TBCD. Interacts with the PP2A C catalytic subunit PPP2CA. Interacts with the PP2A B subunit PPP2R2A. Interacts with the PP2A B subunit PPP2R5D. Interacts with FOXO1; the interaction dephosphorylates FOXO1 on AKT-mediated phosphorylation sites. Interacts with IPO9. Interacts with TP53 and SGO1. Interacts with PLA2G16; this interaction might decrease PP2A activity. Interacts with CTTNBP2NL. Interacts with GNA12; the interaction promotes protein phosphatase 2A activation causing dephosphorylation of MAPT. Interacts with CIP2A; this interaction stabilizes CIP2A. Interacts with PABIR1/FAM122A. Interacts with ADCY8; antagonizes interaction between ADCY8 and calmodulin. Interacts with CRTC3 (when phosphorylated at 'Ser-391'). Interacts with SPRY2. Part of the core of STRIPAK complexes composed of PP2A catalytic and scaffolding subunits, the striatins (PP2A regulatory subunits), the striatin-associated proteins MOB4, STRIP1 and STRIP2, PDCD10 and members of the STE20 kinases, such as STK24 and STK26. Component of the Integrator-PP2A (INTAC) complex, composed of the Integrator core complex and protein phosphatase 2A subunits PPP2CA and PPP2R1A.

The protein resides in the cytoplasm. It is found in the nucleus. It localises to the chromosome. Its subcellular location is the centromere. The protein localises to the lateral cell membrane. The protein resides in the cell projection. It is found in the dendrite. Its function is as follows. The PR65 subunit of protein phosphatase 2A serves as a scaffolding molecule to coordinate the assembly of the catalytic subunit and a variable regulatory B subunit. Upon interaction with GNA12 promotes dephosphorylation of microtubule associated protein TAU/MAPT. Required for proper chromosome segregation and for centromeric localization of SGO1 in mitosis. Together with RACK1 adapter, mediates dephosphorylation of AKT1 at 'Ser-473', preventing AKT1 activation and AKT-mTOR signaling pathway. Dephosphorylation of AKT1 is essential for regulatory T-cells (Treg) homeostasis and stability. Part of the striatin-interacting phosphatase and kinase (STRIPAK) complexes. STRIPAK complexes have critical roles in protein (de)phosphorylation and are regulators of multiple signaling pathways including Hippo, MAPK, nuclear receptor and cytoskeleton remodeling. Different types of STRIPAK complexes are involved in a variety of biological processes such as cell growth, differentiation, apoptosis, metabolism and immune regulation. Key mediator of a quality checkpoint during transcription elongation as part of the Integrator-PP2A (INTAC) complex. The INTAC complex drives premature transcription termination of transcripts that are unfavorably configured for transcriptional elongation: within the INTAC complex, acts as a scaffolding subunit for PPP2CA, which catalyzes dephosphorylation of the C-terminal domain (CTD) of Pol II subunit POLR2A/RPB1 and SUPT5H/SPT5, thereby preventing transcriptional elongation. Regulates the recruitment of the SKA complex to kinetochores. The polypeptide is Serine/threonine-protein phosphatase 2A 65 kDa regulatory subunit A alpha isoform (Ppp2r1a) (Mus musculus (Mouse)).